A 115-amino-acid polypeptide reads, in one-letter code: Nitrogenase-stabilizing/protective protein NifW (115 aa).

It belongs to the NifW family. Homotrimer; associates with NifD.

May protect the nitrogenase Fe-Mo protein from oxidative damage. The protein is Nitrogenase-stabilizing/protective protein NifW of Azotobacter vinelandii (strain DJ / ATCC BAA-1303).